A 141-amino-acid chain; its full sequence is Large ribosomal subunit protein uL11 (141 aa).

This sequence belongs to the universal ribosomal protein uL11 family. As to quaternary structure, part of the ribosomal stalk of the 50S ribosomal subunit. Interacts with L10 and the large rRNA to form the base of the stalk. L10 forms an elongated spine to which L12 dimers bind in a sequential fashion forming a multimeric L10(L12)X complex. Post-translationally, one or more lysine residues are methylated.

Its function is as follows. Forms part of the ribosomal stalk which helps the ribosome interact with GTP-bound translation factors. The polypeptide is Large ribosomal subunit protein uL11 (Campylobacter concisus (strain 13826)).